Reading from the N-terminus, the 366-residue chain is Protein-glutamate methylesterase/protein-glutamine glutaminase 2 (366 aa).

One can recognise a Response regulatory domain in the interval 3–119 (RLLIADDSAL…SLELDRLRPL (117 aa)). At D53 the chain carries 4-aspartylphosphate. The tract at residues 149-168 (AASSPRAKAARRGAARQRAK) is disordered. The span at 156–166 (KAARRGAARQR) shows a compositional bias: basic residues. The region spanning 171–363 (PAPGLVLIGT…AAVIEWGNAD (193 aa)) is the CheB-type methylesterase domain. Residues S181, H208, and D305 contribute to the active site.

This sequence belongs to the CheB family. In terms of processing, phosphorylated by CheA. Phosphorylation of the N-terminal regulatory domain activates the methylesterase activity.

It localises to the cytoplasm. It catalyses the reaction [protein]-L-glutamate 5-O-methyl ester + H2O = L-glutamyl-[protein] + methanol + H(+). The enzyme catalyses L-glutaminyl-[protein] + H2O = L-glutamyl-[protein] + NH4(+). Functionally, involved in chemotaxis. Part of a chemotaxis signal transduction system that modulates chemotaxis in response to various stimuli. Catalyzes the demethylation of specific methylglutamate residues introduced into the chemoreceptors (methyl-accepting chemotaxis proteins or MCP) by CheR. Also mediates the irreversible deamidation of specific glutamine residues to glutamic acid. The polypeptide is Protein-glutamate methylesterase/protein-glutamine glutaminase 2 (Rhodopseudomonas palustris (strain BisB18)).